The primary structure comprises 587 residues: 2-succinyl-5-enolpyruvyl-6-hydroxy-3-cyclohexene-1-carboxylate synthase (587 aa).

This sequence belongs to the TPP enzyme family. MenD subfamily. Homodimer. It depends on Mg(2+) as a cofactor. Mn(2+) is required as a cofactor. Thiamine diphosphate serves as cofactor.

The catalysed reaction is isochorismate + 2-oxoglutarate + H(+) = 5-enolpyruvoyl-6-hydroxy-2-succinyl-cyclohex-3-ene-1-carboxylate + CO2. The protein operates within quinol/quinone metabolism; 1,4-dihydroxy-2-naphthoate biosynthesis; 1,4-dihydroxy-2-naphthoate from chorismate: step 2/7. It functions in the pathway quinol/quinone metabolism; menaquinone biosynthesis. Catalyzes the thiamine diphosphate-dependent decarboxylation of 2-oxoglutarate and the subsequent addition of the resulting succinic semialdehyde-thiamine pyrophosphate anion to isochorismate to yield 2-succinyl-5-enolpyruvyl-6-hydroxy-3-cyclohexene-1-carboxylate (SEPHCHC). The protein is 2-succinyl-5-enolpyruvyl-6-hydroxy-3-cyclohexene-1-carboxylate synthase of Chloroflexus aurantiacus (strain ATCC 29366 / DSM 635 / J-10-fl).